The primary structure comprises 1068 residues: MLVGSQSFSPGGPNGIIRSQSFAGFSGLQERRSRCNSFIENSSALKKPQAKLKKMHNLGHKNNNPPKEPQPKRVEEVYRALKNGLDEYLEVHQTELDKLTAQLKDMKRNSRLGVLYDLDKQIKTIERYMRRLEFHISKVDELYEAYCIQRRLQDGASKMKQAFATSPASKAARESLTEINRSFKEYTENMCTIEVELENLLGEFSIKMKGLAGFARLCPGDQYEIFMKYGRQRWKLKGKIEVNGKQSWDGEETVFLPLIVGFISIKVTELKGLATHILVGSVTCETKELFAARPQVVAVDINDLGTIKLNLEITWYPFDVEDMTASSGAGNKAAALQRRMSMYSQGTPETPTFKDHSFFRWLHPSPDKPRRLSVLSALQDTFFAKLHRSRSFSDLPSLRPSPKAVLELYSNLPDDIFENGKAAEEKMPLSLSFSDLPNGDCALTSHSTGSPSNSTNPEITITPAEFNLSSLASQNEGMDDTSSASSRNSLGEGQEPKSHLKEEDPEEPRKPASAPSEACRRQSSGAGAEHLFLENDVAEALLQESEEASELKPVELDTSEGNITKQLVKRLTSAEVPMATDRLLSEGSVGGESEGCRSFLDGSLEDAFNGLLLALEPHKEQYKEFQDLNQEVMNLDDILKCKPAVSRSRSSSLSLTVESALESFDFLNTSDFDEEEDGDEVCNVGGGADSVFSDTETEKHSYRSVHPEARGHLSEALTEDTGVGTSVAGSPLPLTTGNESLDITIVRHLQYCTQLVQQIVFSSKTPFVARSLLEKLSRQIQVMEKLAAVSDENIGNISSVVEAIPEFHKKLSLLSFWTKCCSPVGVYHSPADRVMKQLEASFARTVNKEYPGLADPVFRTLVSQILDRAEPLLSSSLSSEVVTVFQYYSYFTSHGVSDLESYLSQLARQVSMVQTLQSLRDEKLLQTMSDLAPSNLLAQQEVLRTLALLLTREDNEVSEAVTLYLAAASKNQHFREKALLYYCEALTKTNLQLQKAACLALKILEATESIKMLVTLCQSDTEEIRNVASETLLSLGEDGRLAYEQLDKFPRDCVKVGGRHGTEVATAF.

2 positions are modified to phosphoserine; in isoform: S21 and S37. The tract at residues 45–73 is disordered; that stretch reads LKKPQAKLKKMHNLGHKNNNPPKEPQPKR. Over residues 48–59 the composition is skewed to basic residues; sequence PQAKLKKMHNLG. The tract at residues 55-113 is involved in cell filopodia formation; the sequence is MHNLGHKNNNPPKEPQPKRVEEVYRALKNGLDEYLEVHQTELDKLTAQLKDMKRNSRLG. A coiled-coil region spans residues 83 to 112; the sequence is NGLDEYLEVHQTELDKLTAQLKDMKRNSRL. Phosphoserine; in isoform 2 is present on S341. The segment covering 474–491 has biased composition (polar residues); sequence QNEGMDDTSSASSRNSLG. Positions 474–524 are disordered; sequence QNEGMDDTSSASSRNSLGEGQEPKSHLKEEDPEEPRKPASAPSEACRRQSS. Positions 494-510 are enriched in basic and acidic residues; the sequence is QEPKSHLKEEDPEEPRK. Position 523 is a phosphoserine; in isoform 2 (S523). S573 bears the Phosphoserine mark. At S585 the chain carries Phosphoserine; in isoform 2. Positions 768–793 form a coiled coil; sequence VARSLLEKLSRQIQVMEKLAAVSDEN.

It belongs to the RIPOR family. As to quaternary structure, homooligomer; homooligomerization is regulated by RHOC and leads to the formation of concatemers through the association of N- and C-termini. Interacts with 14-3-3 proteins; these interactions occur during myogenic cell differentiation. Interacts with HDAC6; this interaction occurs during early myogenic differentiation and prevents HDAC6 to deacetylate tubulin. Interacts with DYSF; this interaction occurs during early myogenic differentiation. Interacts with MYOF. Interacts with RHOC. Isoform 1 and isoform 2 interact (via active GTP- or inactive GDP-bound forms) with RHOA; these interactions are direct, block the loading of GTP to RHOA and decrease upon chemokine CCL19 stimulation in primary T lymphocytes. Isoform 2 interacts (phosphorylated form) with HDAC6; this interaction induces T cell proliferation arrest. Isoform 2 interacts (phosphorylated form) with 14-3-3 proteins; these interactions induces T cell proliferation arrest. Isoform 2 interacts with 14-3-3 proteins. Isoform 2 interacts (via phosphorylated form) with YWHAB; this interaction occurs in a chemokine-dependent manner and does not compete for binding of RIPOR2 with RHOA nor blocks inhibition of RIPOR2-mediated RHOA activity. Isoform 2 interacts with YWHAE. Isoform 2 interacts with YWHAQ. In terms of processing, phosphorylated. Isoform 2 is phosphorylated in T cells. Chemokine-induced phosphorylation of isoform 2 in neutrophils occurs in a PKC- and AKT-dependent manner, resulting in RIPOR2 interaction with YWHAB and stabilization. Isoform 2 is phosphorylated by PKCA, AKT1 and MAPKAPK1A; in vitro. Post-translationally, acetylated during myogenic differentiation. In terms of tissue distribution, expressed in primary fetal mononuclear myoblast. Expressed strongly in naive T lymphocytes. Expressed weakly in activated T lymphocytes (at protein level). Expressed in blood cells and adult tissues of hematopoietic origin, such as the secondary lymphoid organs. Expressed in cytotrophoblast.

It localises to the cytoplasm. Its subcellular location is the cytoskeleton. The protein localises to the cell projection. The protein resides in the filopodium. It is found in the stereocilium. It localises to the stereocilium membrane. Its subcellular location is the apical cell membrane. Acts as an inhibitor of the small GTPase RHOA and plays several roles in the regulation of myoblast and hair cell differentiation, lymphocyte T proliferation and neutrophil polarization. Inhibits chemokine-induced T lymphocyte responses, such as cell adhesion, polarization and migration. Involved also in the regulation of neutrophil polarization, chemotaxis and adhesion. Required for normal development of inner and outer hair cell stereocilia within the cochlea of the inner ear. Plays a role for maintaining the structural organization of the basal domain of stereocilia. Involved in mechanosensory hair cell function. Required for normal hearing. In terms of biological role, acts as an inhibitor of the small GTPase RHOA. Plays a role in fetal mononuclear myoblast differentiation by promoting filopodia and myotube formation. Maintains naive T lymphocytes in a quiescent state. In Homo sapiens (Human), this protein is Rho family-interacting cell polarization regulator 2 (RIPOR2).